A 406-amino-acid polypeptide reads, in one-letter code: NIPA-like protein 3 (406 aa).

Transmembrane regions (helical) follow at residues 33–53 (NLIG…ALNL), 76–96 (WWLG…SYAF), 101–121 (LIVP…IIFI), and 135–155 (ILSF…VTFA). An N-linked (GlcNAc...) asparagine glycan is attached at asparagine 166. The next 5 helical transmembrane spans lie at 171-191 (LVSW…CLLL), 202-222 (IVVI…TVKA), 240-260 (PIFY…AAFL), 271-291 (LIAS…GAIF), and 300-320 (VLHI…VFLI). Serine 372 carries the post-translational modification Phosphoserine.

Belongs to the NIPA family.

It is found in the membrane. In Pongo abelii (Sumatran orangutan), this protein is NIPA-like protein 3 (NIPAL3).